Consider the following 89-residue polypeptide: Small ribosomal subunit protein uS15 (89 aa).

Belongs to the universal ribosomal protein uS15 family. Part of the 30S ribosomal subunit. Forms a bridge to the 50S subunit in the 70S ribosome, contacting the 23S rRNA.

One of the primary rRNA binding proteins, it binds directly to 16S rRNA where it helps nucleate assembly of the platform of the 30S subunit by binding and bridging several RNA helices of the 16S rRNA. Its function is as follows. Forms an intersubunit bridge (bridge B4) with the 23S rRNA of the 50S subunit in the ribosome. This Rhodococcus erythropolis (strain PR4 / NBRC 100887) protein is Small ribosomal subunit protein uS15.